A 372-amino-acid chain; its full sequence is Queuine tRNA-ribosyltransferase (372 aa).

Catalysis depends on Asp92, which acts as the Proton acceptor. Residues 92-96, Asp146, Gln188, and Gly215 contribute to the substrate site; that span reads DSGGY. Residues 246–252 are RNA binding; the sequence is GIGSLKE. Asp265 functions as the Nucleophile in the catalytic mechanism. Residues 270 to 274 form an RNA binding; important for wobble base 34 recognition region; that stretch reads TRLGR. 4 residues coordinate Zn(2+): Cys303, Cys305, Cys308, and His334.

This sequence belongs to the queuine tRNA-ribosyltransferase family. In terms of assembly, homodimer. Within each dimer, one monomer is responsible for RNA recognition and catalysis, while the other monomer binds to the replacement base PreQ1. Requires Zn(2+) as cofactor.

The catalysed reaction is 7-aminomethyl-7-carbaguanine + guanosine(34) in tRNA = 7-aminomethyl-7-carbaguanosine(34) in tRNA + guanine. Its pathway is tRNA modification; tRNA-queuosine biosynthesis. Catalyzes the base-exchange of a guanine (G) residue with the queuine precursor 7-aminomethyl-7-deazaguanine (PreQ1) at position 34 (anticodon wobble position) in tRNAs with GU(N) anticodons (tRNA-Asp, -Asn, -His and -Tyr). Catalysis occurs through a double-displacement mechanism. The nucleophile active site attacks the C1' of nucleotide 34 to detach the guanine base from the RNA, forming a covalent enzyme-RNA intermediate. The proton acceptor active site deprotonates the incoming PreQ1, allowing a nucleophilic attack on the C1' of the ribose to form the product. After dissociation, two additional enzymatic reactions on the tRNA convert PreQ1 to queuine (Q), resulting in the hypermodified nucleoside queuosine (7-(((4,5-cis-dihydroxy-2-cyclopenten-1-yl)amino)methyl)-7-deazaguanosine). This chain is Queuine tRNA-ribosyltransferase, found in Prochlorococcus marinus (strain MIT 9301).